A 312-amino-acid polypeptide reads, in one-letter code: Aspartate carbamoyltransferase catalytic subunit (312 aa).

Carbamoyl phosphate-binding residues include R58 and T59. An L-aspartate-binding site is contributed by K86. Positions 108, 136, and 139 each coordinate carbamoyl phosphate. L-aspartate contacts are provided by R169 and R223. Carbamoyl phosphate is bound by residues G264 and P265.

The protein belongs to the aspartate/ornithine carbamoyltransferase superfamily. ATCase family. In terms of assembly, heterododecamer (2C3:3R2) of six catalytic PyrB chains organized as two trimers (C3), and six regulatory PyrI chains organized as three dimers (R2).

It carries out the reaction carbamoyl phosphate + L-aspartate = N-carbamoyl-L-aspartate + phosphate + H(+). The protein operates within pyrimidine metabolism; UMP biosynthesis via de novo pathway; (S)-dihydroorotate from bicarbonate: step 2/3. Functionally, catalyzes the condensation of carbamoyl phosphate and aspartate to form carbamoyl aspartate and inorganic phosphate, the committed step in the de novo pyrimidine nucleotide biosynthesis pathway. This chain is Aspartate carbamoyltransferase catalytic subunit, found in Desulfitobacterium hafniense (strain DSM 10664 / DCB-2).